Here is an 89-residue protein sequence, read N- to C-terminus: UPF0147 protein YN1551_1489 (89 aa).

The protein belongs to the UPF0147 family.

This chain is UPF0147 protein YN1551_1489, found in Saccharolobus islandicus (strain Y.N.15.51 / Yellowstone #2) (Sulfolobus islandicus).